The following is a 760-amino-acid chain: Catecholate siderophore receptor Fiu (760 aa).

An N-terminal signal peptide occupies residues 1-31 (MENNRNFPARQFHSLTFFAGLCIGITPVAQA). A TBDR plug domain is found at 67–175 (PVADTTRTMT…PTGSINMISK (109 aa)). The 581-residue stretch at 180–760 (DSGIDASASI…TFLLTANMHF (581 aa)) folds into the TBDR beta-barrel domain. The short motif at 743–760 (RYHPGEPRTFLLTANMHF) is the TonB C-terminal box element.

The protein belongs to the TonB-dependent receptor family.

Its subcellular location is the cell outer membrane. In terms of biological role, involved in the active transport across the outer membrane of iron complexed with catecholate siderophores such as dihydroxybenzoylserine and dihydroxybenzoate. It derives its energy for transport by interacting with the trans-periplasmic membrane protein TonB. Can also transport catechol-substituted cephalosporins. Receptor for microcins M, H47 and E492. The polypeptide is Catecholate siderophore receptor Fiu (fiu) (Escherichia coli (strain K12)).